Consider the following 246-residue polypeptide: Probable phosphatase Tola_0828 (246 aa).

H8, H10, H16, H41, E74, H102, H132, D193, and H195 together coordinate Zn(2+).

It belongs to the PHP family. It depends on Zn(2+) as a cofactor.

This chain is Probable phosphatase Tola_0828, found in Tolumonas auensis (strain DSM 9187 / NBRC 110442 / TA 4).